We begin with the raw amino-acid sequence, 100 residues long: Small ribosomal subunit protein uS14c (100 aa).

This sequence belongs to the universal ribosomal protein uS14 family. In terms of assembly, part of the 30S ribosomal subunit.

It is found in the plastid. Its subcellular location is the chloroplast. Binds 16S rRNA, required for the assembly of 30S particles. The sequence is that of Small ribosomal subunit protein uS14c from Buxus microphylla (Littleleaf boxwood).